We begin with the raw amino-acid sequence, 422 residues long: Glucose-1-phosphate adenylyltransferase (422 aa).

Alpha-D-glucose 1-phosphate contacts are provided by residues tyrosine 108, glycine 173, 188–189 (EK), and serine 206.

It belongs to the bacterial/plant glucose-1-phosphate adenylyltransferase family. Homotetramer.

The catalysed reaction is alpha-D-glucose 1-phosphate + ATP + H(+) = ADP-alpha-D-glucose + diphosphate. It functions in the pathway glycan biosynthesis; glycogen biosynthesis. Its function is as follows. Involved in the biosynthesis of ADP-glucose, a building block required for the elongation reactions to produce glycogen. Catalyzes the reaction between ATP and alpha-D-glucose 1-phosphate (G1P) to produce pyrophosphate and ADP-Glc. The polypeptide is Glucose-1-phosphate adenylyltransferase (Paraburkholderia phymatum (strain DSM 17167 / CIP 108236 / LMG 21445 / STM815) (Burkholderia phymatum)).